The chain runs to 384 residues: Histone acetyltransferase type B subunit 2 (384 aa).

WD repeat units follow at residues 156–196 (GHSA…SSIS), 203–243 (RHET…CIHA), 247–287 (AHTS…QPLH), 291–331 (GHSK…AEVP), and 348–384 (GHTS…PQPE).

The protein belongs to the WD repeat RBAP46/RBAP48/MSI1 family. As to quaternary structure, component of the HAT-B complex.

Its subcellular location is the cytoplasm. It is found in the nucleus. Regulatory subunit of the histone acetylase B (HAT-B) complex. The complex acetylates histone H4 which is required for telomeric silencing. This chain is Histone acetyltransferase type B subunit 2 (HAT2), found in Encephalitozoon cuniculi (strain GB-M1) (Microsporidian parasite).